The sequence spans 1069 residues: Regulator of nonsense transcripts 1 (1069 aa).

Positions M1–H86 are disordered. A compositionally biased stretch (polar residues) spans I28–A50. Positions T51–L65 are enriched in low complexity. A compositionally biased stretch (basic and acidic residues) spans S77 to H86. Positions E87 to H244 constitute a Upf1 CH-rich domain. Zn(2+) is bound by residues C95, C98, C109, C112, C117, H127, H131, H137, C155, C158, C181, and C185. The C3H stretch occupies residues C95–H127. The interval C109–H137 is CC/SHH/C. A C4 region spans residues C155 to C185. Residues Q450, G467–T474, Q639, Y676, and E807 contribute to the ATP site. Residues A966–C1069 form a disordered region. The segment covering S991 to Y1013 has biased composition (low complexity).

The protein belongs to the DNA2/NAM7 helicase family. Phosphorylated probably by smg-1. Smg-3 and smg-4 are required for phosphorylation.

It is found in the cytoplasm. It carries out the reaction ATP + H2O = ADP + phosphate + H(+). In terms of biological role, RNA-dependent helicase required for nonsense-mediated decay (NMD) of aberrant mRNAs containing premature stop codons and modulates the expression level of normal mRNAs. Is recruited to mRNAs upon translation termination and undergoes a cycle of phosphorylation and dephosphorylation; its phosphorylation appears to be a key step in NMD. The formation of an smg-2-3-4 surveillance complex is believed to activate NMD. In Caenorhabditis elegans, this protein is Regulator of nonsense transcripts 1 (smg-2).